A 564-amino-acid polypeptide reads, in one-letter code: O-fucosyltransferase 5 (564 aa).

The tract at residues 1–28 is disordered; sequence MVRNSSDEEEDHRNLIPQNDTRDNDLNL. The chain crosses the membrane as a helical; Signal-anchor for type II membrane protein span at residues 70 to 90; that stretch reads YVVAAVSLTLFVGLLFLFTDT. 3 N-linked (GlcNAc...) asparagine glycosylation sites follow: asparagine 129, asparagine 134, and asparagine 174. Substrate contacts are provided by residues 413–415 and 529–530; these read HLR and TF.

Belongs to the glycosyltransferase GT106 family.

It is found in the membrane. Its pathway is glycan metabolism. The chain is O-fucosyltransferase 5 from Arabidopsis thaliana (Mouse-ear cress).